The primary structure comprises 347 residues: MAIDEDKQKAISLAIKQIDKVFGKGALVRLGDKQVEKIDAISTGSLGLDLALGIGGVPKGRIIEIYGPESSGKTTLSLHIIAECQKNGGVCAFIDAEHALDVHYAKRLGVDTENLLVSQPDTGEQALEILETITRSGGIDLVVVDSVAALTPKAEIDGDMGDQHVGLQARLMSHALRKITGVLHKMNTTLIFINQIRMKIGMMGYGSPETTTGGNALKFYASVRIDIRRIAALKQNEQHIGNRAKAKVVKNKVAPPFREAEFDIMFGEGISKEGEIIDYGVKLDIVDKSGAWLSYQDKKLGQGRENAKALLKEDKALADEITLKIKESIGSNEEIMPLPDEPLEEME.

67–74 (GPESSGKT) is a binding site for ATP.

Belongs to the RecA family.

The protein localises to the cytoplasm. Can catalyze the hydrolysis of ATP in the presence of single-stranded DNA, the ATP-dependent uptake of single-stranded DNA by duplex DNA, and the ATP-dependent hybridization of homologous single-stranded DNAs. It interacts with LexA causing its activation and leading to its autocatalytic cleavage. This Helicobacter pylori (strain HPAG1) protein is Protein RecA.